Reading from the N-terminus, the 165-residue chain is MLMKRLFSSSHVFSSSSASSNLLKIGSVLKQARTFADDDVLGYSKLTHDANPLHFDAECAKNAGFTDCLVPGMLVASLFPRIIAAHFPGAIYVSQTLHFKLPVYIGDEIIAEVQAVSIRQIKNKYIAKLSTKCIKRDGPLVIDGEATAMLPSLVMEPPNLEITSS.

The N-terminal 35 residues, 1–35 (MLMKRLFSSSHVFSSSSASSNLLKIGSVLKQARTF), are a transit peptide targeting the mitochondrion. A MaoC-like domain is found at 36–124 (ADDDVLGYSK…AVSIRQIKNK (89 aa)).

In terms of assembly, homodimer.

The protein resides in the mitochondrion. It carries out the reaction a (3R)-hydroxyacyl-[ACP] = a (2E)-enoyl-[ACP] + H2O. The protein operates within lipid metabolism; fatty acid biosynthesis. In terms of biological role, 3-hydroxyl-[acyl-carrier-protein] (3-hydroxyl-ACP) dehydratase required for mitochondrial fatty acid synthesis (mtFAS). Essential for photorespiration, tomato morphogenesis and plant development, probably by influencing mitochondrial membrane lipid composition and other lipid metabolic pathways, and by contributing to energy supply and reactive oxygen species (ROS) homeostasis. This chain is 3-hydroxyacyl-[acyl-carrier-protein] dehydratase FERN, mitochondrial, found in Solanum lycopersicum (Tomato).